Here is a 374-residue protein sequence, read N- to C-terminus: DNA primase small subunit PriS (374 aa).

Residues aspartate 99, aspartate 101, and aspartate 281 contribute to the active site.

Belongs to the eukaryotic-type primase small subunit family. Heterodimer of a small subunit (PriS) and a large subunit (PriL). Requires Mg(2+) as cofactor. Mn(2+) is required as a cofactor.

Functionally, catalytic subunit of DNA primase, an RNA polymerase that catalyzes the synthesis of short RNA molecules used as primers for DNA polymerase during DNA replication. The small subunit contains the primase catalytic core and has DNA synthesis activity on its own. Binding to the large subunit stabilizes and modulates the activity, increasing the rate of DNA synthesis while decreasing the length of the DNA fragments, and conferring RNA synthesis capability. The DNA polymerase activity may enable DNA primase to also catalyze primer extension after primer synthesis. May also play a role in DNA repair. The polypeptide is DNA primase small subunit PriS (Methanoregula boonei (strain DSM 21154 / JCM 14090 / 6A8)).